Here is a 425-residue protein sequence, read N- to C-terminus: Protein CLP1 homolog (425 aa).

ATP contacts are provided by residues Glu-18, Lys-59, and 121–126 (DVGKST).

It belongs to the Clp1 family. Clp1 subfamily.

It localises to the nucleus. Functionally, required for endonucleolytic cleavage during polyadenylation-dependent pre-mRNA 3'-end formation. The sequence is that of Protein CLP1 homolog (cbc) from Drosophila grimshawi (Hawaiian fruit fly).